Reading from the N-terminus, the 675-residue chain is PTS system glucose-specific EIICBA component (675 aa).

One can recognise a PTS EIIC type-1 domain in the interval 3-414 (KKLFGQLQRI…FNFKTPGRED (412 aa)). Helical transmembrane passes span 16–36 (LMLPVAILPAAGLLLAIGTAF), 59–79 (MMTGAGGIIFDNLPIIFALGV), 81–101 (IGLAGGDGVAAIAAFVGFIIM), 126–146 (VLGIPTLQTGVFGGIIIGALA), 173–193 (IMMATTSFILAFPMAWIWPFI), 199–219 (AFSTGLLDSNTGLAVFLFGFI), 273–293 (FMQGEFPVMMFGLPAAALAIY), 303–323 (VVGGLMLSAALTSFLTGITEP), 328–348 (FLFVAPLLFFIHAVLDGLSFL), 355–375 (LHLGYTFSGGFIDFVLLGILP), and 378–398 (TPWWLVIPVGLVYAVIYYVVF). The region spanning 425–506 (SKLPFDVLDA…ARIMNGDITK (82 aa)) is the PTS EIIB type-1 domain. Residue Cys447 is the Phosphocysteine intermediate; for EIIB activity of the active site. Positions 547–651 (DKVFSEKMMG…SVVTPVIITN (105 aa)) constitute a PTS EIIA type-1 domain. His599 serves as the catalytic Tele-phosphohistidine intermediate; for EIIA activity.

The protein localises to the cell membrane. The enzyme catalyses N(pros)-phospho-L-histidyl-[protein] + D-glucose(out) = D-glucose 6-phosphate(in) + L-histidyl-[protein]. Its function is as follows. The phosphoenolpyruvate-dependent sugar phosphotransferase system (sugar PTS), a major carbohydrate active transport system, catalyzes the phosphorylation of incoming sugar substrates concomitantly with their translocation across the cell membrane. This system is involved in glucose transport. In Staphylococcus haemolyticus (strain JCSC1435), this protein is PTS system glucose-specific EIICBA component (ptsG).